Reading from the N-terminus, the 350-residue chain is DNA repair protein RAD51 homolog 2 (350 aa).

The tract at residues 1-75 (MSSKKLRRVG…TAYELKTRRS (75 aa)) is interaction with RAD51C. An ATP-binding site is contributed by 108–115 (GPPGCGKT).

It belongs to the RecA family. RAD51 subfamily. Part of the BCDX2 complex consisting of RAD51B, RAD51C, RAD51D and XRCC2; the complex has a ring-like structure arranged into a flat disc around a central channel. The BCDX2 subcomplex RAD51B:RAD51C interacts with RAD51. Interacts with SWSAP1; involved in homologous recombination repair. Interacts with HELQ. Phosphorylated on tyrosine residues by BCR-ABL. Expressed in a wide range of tissues.

It is found in the nucleus. In terms of biological role, involved in the homologous recombination repair (HRR) pathway of double-stranded DNA breaks arising during DNA replication or induced by DNA-damaging agents. May promote the assembly of presynaptic RAD51 nucleoprotein filaments. Binds single-stranded DNA and double-stranded DNA and has DNA-dependent ATPase activity. Part of the RAD51 paralog protein complex BCDX2 which acts in the BRCA1-BRCA2-dependent HR pathway. Upon DNA damage, BCDX2 acts downstream of BRCA2 recruitment and upstream of RAD51 recruitment. BCDX2 binds predominantly to the intersection of the four duplex arms of the Holliday junction and to junction of replication forks. The BCDX2 complex was originally reported to bind single-stranded DNA, single-stranded gaps in duplex DNA and specifically to nicks in duplex DNA. The BCDX2 subcomplex RAD51B:RAD51C exhibits single-stranded DNA-dependent ATPase activity suggesting an involvement in early stages of the HR pathway. The sequence is that of DNA repair protein RAD51 homolog 2 (Rad51b) from Mus musculus (Mouse).